Reading from the N-terminus, the 27-residue chain is Chitinase 47 kDa (27 aa).

One can recognise a GH18 domain in the interval 3-27; sequence SKVVGYFTEWGTYDRKYYVKNIEXS.

This sequence belongs to the glycosyl hydrolase 18 family. Chitinase class II subfamily. Homodimer.

The enzyme catalyses Random endo-hydrolysis of N-acetyl-beta-D-glucosaminide (1-&gt;4)-beta-linkages in chitin and chitodextrins.. Functionally, able to cleave chitin oligomers from N=3 to 6. This chain is Chitinase 47 kDa, found in Streptomyces olivaceoviridis (Streptomyces corchorusii).